The primary structure comprises 343 residues: S-adenosylmethionine:tRNA ribosyltransferase-isomerase (343 aa).

It belongs to the QueA family. As to quaternary structure, monomer.

The protein localises to the cytoplasm. The enzyme catalyses 7-aminomethyl-7-carbaguanosine(34) in tRNA + S-adenosyl-L-methionine = epoxyqueuosine(34) in tRNA + adenine + L-methionine + 2 H(+). Its pathway is tRNA modification; tRNA-queuosine biosynthesis. Transfers and isomerizes the ribose moiety from AdoMet to the 7-aminomethyl group of 7-deazaguanine (preQ1-tRNA) to give epoxyqueuosine (oQ-tRNA). The polypeptide is S-adenosylmethionine:tRNA ribosyltransferase-isomerase (Dehalococcoides mccartyi (strain CBDB1)).